A 118-amino-acid polypeptide reads, in one-letter code: Large ribosomal subunit protein bL20 (118 aa).

It belongs to the bacterial ribosomal protein bL20 family.

Binds directly to 23S ribosomal RNA and is necessary for the in vitro assembly process of the 50S ribosomal subunit. It is not involved in the protein synthesizing functions of that subunit. This Francisella tularensis subsp. novicida (strain U112) protein is Large ribosomal subunit protein bL20.